The primary structure comprises 416 residues: Thioredoxin domain-containing protein 5 homolog (416 aa).

An N-terminal signal peptide occupies residues 1-25 (MLTRSILSVAVCGLLLSPLLPITRA). Thioredoxin domains follow at residues 26-145 (SQEE…KELS), 150-272 (ADLG…KMVG), and 293-412 (AGEE…KFLG). Intrachain disulfides connect Cys-65–Cys-68, Cys-194–Cys-197, and Cys-331–Cys-334. Positions 413–416 (HDEL) match the Prevents secretion from ER motif.

Belongs to the protein disulfide isomerase family.

The protein resides in the endoplasmic reticulum. It is found in the cell surface. Functionally, possesses thioredoxin activity. Acts as a ligand for Drpr and is required for the phagocytosis of apoptotic cells. Binds to the extracellular region of Drpr and augments Drpr tyrosine phosphorylation. This Drosophila melanogaster (Fruit fly) protein is Thioredoxin domain-containing protein 5 homolog.